Here is a 40-residue protein sequence, read N- to C-terminus: CGDINAPCQSDCDCCGYSVTCDCYWGNECKCRESNFAIGM.

4 disulfides stabilise this stretch: Cys-1–Cys-15, Cys-8–Cys-21, Cys-14–Cys-31, and Cys-23–Cys-29.

This sequence belongs to the neurotoxin 03 (Tx2) family. 05 subfamily. As to expression, expressed by the venom gland.

The protein localises to the secreted. Functionally, potent insecticidal toxin that binds to two distinct sites in insect sodium channels, with close affinity (Kd1=34.7 pM and Kd2=35.1 pM). Its association is rather fast (1.4 and 8.5 minutes, respectively for sites 1 and 2) and its dissociation is a slower process (5.4 and 32.8 minutes, respectively). On rat brain synaptosomes the toxin partially competes (~30%) with the beta-toxin CssIV, but does not compete with the alpha-toxin AaII, nor with the beta-toxin Ts VII. On cockroach nerve cord synaptosomes, the toxin does not compete with the anti-insect toxin LqqIT1, but it competes with the 'alpha-like' toxin BomIV (IC(50)=80 pM). In cockroach neurons, the toxin inhibits the inactivation of sodium channels and it shifts the sodium channel activation to hyperpolarizing potentials. Hence, it behaves like an 'alpha-like' toxin and binds preferentially to site 3 on the insect Nav channel, located on the domain IV. The toxin may also inhibit the N-methyl-D-aspartate (NMDA)-subtype of ionotropic glutamate receptor (GRIN). In vivo, the toxin causes excitatory effects on insects. The chain is Beta/delta-ctenitoxin-Pr1a from Phoneutria reidyi (Brazilian Amazonian armed spider).